The following is a 303-amino-acid chain: Glutathione transport system permease protein GsiD (303 aa).

7 helical membrane passes run 37–57 (QHVA…AIFA), 105–125 (LAAG…LGLL), 144–164 (LFAF…GSGI), 165–185 (ANVI…LVRG), 208–228 (TILF…FFTM), 230–250 (IGTS…AQPP), and 266–286 (VIAP…VLAF). Positions 101–290 (AQISLAAGVF…LTVLAFNLLG (190 aa)) constitute an ABC transmembrane type-1 domain.

Belongs to the binding-protein-dependent transport system permease family. As to quaternary structure, the complex is composed of two ATP-binding proteins (GsiA), two transmembrane proteins (GsiC and GsiD) and a solute-binding protein (GsiB).

It localises to the cell inner membrane. Functionally, part of the ABC transporter complex GsiABCD involved in glutathione import. Probably responsible for the translocation of the substrate across the membrane. The chain is Glutathione transport system permease protein GsiD from Salmonella paratyphi A (strain ATCC 9150 / SARB42).